A 232-amino-acid chain; its full sequence is 5'-methylthioadenosine/S-adenosylhomocysteine nucleosidase (232 aa).

E12 (proton acceptor) is an active-site residue. Substrate is bound by residues G78, M153, and 174–175 (ME). D198 (proton donor) is an active-site residue.

Belongs to the PNP/UDP phosphorylase family. MtnN subfamily.

The catalysed reaction is S-adenosyl-L-homocysteine + H2O = S-(5-deoxy-D-ribos-5-yl)-L-homocysteine + adenine. It catalyses the reaction S-methyl-5'-thioadenosine + H2O = 5-(methylsulfanyl)-D-ribose + adenine. It carries out the reaction 5'-deoxyadenosine + H2O = 5-deoxy-D-ribose + adenine. The protein operates within amino-acid biosynthesis; L-methionine biosynthesis via salvage pathway; S-methyl-5-thio-alpha-D-ribose 1-phosphate from S-methyl-5'-thioadenosine (hydrolase route): step 1/2. Catalyzes the irreversible cleavage of the glycosidic bond in both 5'-methylthioadenosine (MTA) and S-adenosylhomocysteine (SAH/AdoHcy) to adenine and the corresponding thioribose, 5'-methylthioribose and S-ribosylhomocysteine, respectively. Also cleaves 5'-deoxyadenosine, a toxic by-product of radical S-adenosylmethionine (SAM) enzymes, into 5-deoxyribose and adenine. This Hydrogenovibrio crunogenus (strain DSM 25203 / XCL-2) (Thiomicrospira crunogena) protein is 5'-methylthioadenosine/S-adenosylhomocysteine nucleosidase.